A 449-amino-acid chain; its full sequence is Nuclear hormone receptor family member nhr-43 (449 aa).

The nuclear receptor DNA-binding region spans 44–122 (NIHCRVCERR…VGLNVDAVVG (79 aa)). NR C4-type zinc fingers lie at residues 47-68 (CRVCERRYDGSQHFGIDICRAC) and 84-105 (CRRGTNKCELNTVSRKTTCQKC). Positions 125–142 (SPDHVKTTSRDESVKKED) are enriched in basic and acidic residues. A disordered region spans residues 125–154 (SPDHVKTTSRDESVKKEDEESDTGSEGKSC). Residues 200–449 (NYNEFTKSRL…SDLNAYLYSI (250 aa)) form the NR LBD domain.

It is found in the nucleus. Functionally, ligand-activated transcription factor. Positively modulates expression of homeobox protein lin-39, perhaps by binding to the sequence motif 5'-TGAC-3' in regulatory regions of the lin-39 gene, acting in the embryo, and also in the vulval lineage. This is Nuclear hormone receptor family member nhr-43 from Caenorhabditis elegans.